A 310-amino-acid polypeptide reads, in one-letter code: NADH-cytochrome b5 reductase 1 (310 aa).

A helical transmembrane segment spans residues 30 to 50; it reads WVPFAVALAAGFVAWKLSVGG. An FAD-binding FR-type domain is found at 61 to 166; that stretch reads NEFQNFVLKE…RGPKGAMVYT (106 aa). Residues 146 to 160 and 172 to 209 each bind FAD; these read TTLKVGDTMKVRGPK and HIGMIAGGTGITPMLQIIKAIIRNRPRNGGNDTTQVDL.

It belongs to the flavoprotein pyridine nucleotide cytochrome reductase family. As to quaternary structure, monomer. Component of the 2-(3-amino-3-carboxypropyl)histidine synthase complex composed of dph1, dph2, dph3 and a NADH-dependent reductase, predominantly cbr1. FAD serves as cofactor.

The protein localises to the mitochondrion outer membrane. The enzyme catalyses 2 Fe(III)-[cytochrome b5] + NADH = 2 Fe(II)-[cytochrome b5] + NAD(+) + H(+). The catalysed reaction is 2 Fe(3+)-[Dph3] + NADH = 2 Fe(2+)-[Dph3] + NAD(+) + H(+). The protein operates within protein modification; peptidyl-diphthamide biosynthesis. Functionally, NADH-dependent reductase for dph3 and cytochrome b5. Required for the first step of diphthamide biosynthesis, a post-translational modification of histidine which occurs in elongation factor 2. Dph1 and dph2 transfer a 3-amino-3-carboxypropyl (ACP) group from S-adenosyl-L-methionine (SAM) to a histidine residue, the reaction is assisted by a reduction system comprising dph3 and a NADH-dependent reductase, predominantly cbr1. By reducing dph3, also involved in the formation of the tRNA wobble base modification mcm5s 2U (5-methoxycarbonylmethyl-2-thiouridine), mediated by the elongator complex. The cytochrome b5/NADH cytochrome b5 reductase electron transfer system supports the catalytic activity of several sterol biosynthetic enzymes. This chain is NADH-cytochrome b5 reductase 1 (cbr1), found in Emericella nidulans (strain FGSC A4 / ATCC 38163 / CBS 112.46 / NRRL 194 / M139) (Aspergillus nidulans).